We begin with the raw amino-acid sequence, 188 residues long: Elongation factor P (188 aa).

Belongs to the elongation factor P family.

The protein localises to the cytoplasm. The protein operates within protein biosynthesis; polypeptide chain elongation. Functionally, involved in peptide bond synthesis. Stimulates efficient translation and peptide-bond synthesis on native or reconstituted 70S ribosomes in vitro. Probably functions indirectly by altering the affinity of the ribosome for aminoacyl-tRNA, thus increasing their reactivity as acceptors for peptidyl transferase. This Chlorobium phaeobacteroides (strain DSM 266 / SMG 266 / 2430) protein is Elongation factor P.